The sequence spans 539 residues: MNYTLETADRALGAFPALLGAAFAHDSLFAAHMWVLFFTLVVSTLLLLRRVSFLPPVAGPPCRRTEYFDEVVKYGVMATVFWGVVGFLVGVVVALQLAFPDLNIAPYFNFGRMRPLHTSAVIFAFGGNALIATSFYVVQRTCRARLFGGNLGWFVFWGYNLFIIMAATGYLLGITQGREYAEPEWYVDLWLTIVWVAYLATFLGTILTRKEPHISVANWFYLSFIVTIAMLHIVNNLAVPVSFLGVKSYSAFSGVQAALTQWWYGHNAVGFFLTAGFLGMMYYFIPKQVNRPVYSYRLSIIHFWALIFMYIWAGPHHLHYTALPDWAQTLGMVFSIMLWMPSWGGMINGLMTLSGAWDKIRTDPIVRMMVMAVAFYGMATFEGPMMSIKAVNSLSHYTDWTIGHVHSGALGWNGMITFGAIYYLTPKLWGRDRLYSLQLVNWHFWLATLGIVVYAAVMWVAGIQQALMWREYDSQGFLVYSFAESVAALFPYYVMRALGGLMFLSGALIMAYNVTMTILGHQREEGASKGAAPSLQPAE.

2 helical membrane-spanning segments follow: residues 28–48 (LFAAHMWVLFFTLVVSTLLLL) and 75–95 (GVMATVFWGVVGFLVGVVVAL). Histidine 117 lines the heme b pocket. Transmembrane regions (helical) follow at residues 118-138 (TSAVIFAFGGNALIATSFYVV), 154-174 (FVFWGYNLFIIMAATGYLLGI), 187-207 (VDLWLTIVWVAYLATFLGTIL), 214-234 (ISVANWFYLSFIVTIAMLHIV), 265-285 (GHNAVGFFLTAGFLGMMYYFI), 298-318 (LSIIHFWALIFMYIWAGPHHL), 330-350 (LGMVFSIMLWMPSWGGMINGL), 368-388 (MMVMAVAFYGMATFEGPMMSI), 402-422 (IGHVHSGALGWNGMITFGAIY), 443-463 (HFWLATLGIVVYAAVMWVAGI), and 498-518 (LGGLMFLSGALIMAYNVTMTI). Residues histidine 266, histidine 316, and histidine 317 each coordinate Cu cation. The heme b site is built by histidine 404 and histidine 406.

Belongs to the heme-copper respiratory oxidase family. Requires Cu(2+) as cofactor. It depends on heme b as a cofactor.

The protein resides in the cell membrane. The catalysed reaction is 4 Fe(II)-[cytochrome c] + O2 + 8 H(+)(in) = 4 Fe(III)-[cytochrome c] + 2 H2O + 4 H(+)(out). The protein operates within energy metabolism; oxidative phosphorylation. Its function is as follows. Cytochrome c oxidase is the component of the respiratory chain that catalyzes the reduction of oxygen to water. Subunits 1-3 form the functional core of the enzyme complex. Co I is the catalytic subunit of the enzyme. Electrons originating in cytochrome c or a quinol are transferred to the bimetallic center formed by a high-spin heme and copper B. The polypeptide is Cytochrome c oxidase subunit 1 homolog (fixN) (Agrobacterium tumefaciens (strain T37)).